A 159-amino-acid polypeptide reads, in one-letter code: Putative pre-16S rRNA nuclease (159 aa).

This sequence belongs to the YqgF nuclease family.

It localises to the cytoplasm. In terms of biological role, could be a nuclease involved in processing of the 5'-end of pre-16S rRNA. This Bartonella henselae (strain ATCC 49882 / DSM 28221 / CCUG 30454 / Houston 1) (Rochalimaea henselae) protein is Putative pre-16S rRNA nuclease.